We begin with the raw amino-acid sequence, 224 residues long: UPF0173 metal-dependent hydrolase TTHA1283 (224 aa).

This sequence belongs to the UPF0173 family.

The sequence is that of UPF0173 metal-dependent hydrolase TTHA1283 from Thermus thermophilus (strain ATCC 27634 / DSM 579 / HB8).